A 430-amino-acid polypeptide reads, in one-letter code: Histidine--tRNA ligase (430 aa).

Belongs to the class-II aminoacyl-tRNA synthetase family. As to quaternary structure, homodimer.

Its subcellular location is the cytoplasm. The catalysed reaction is tRNA(His) + L-histidine + ATP = L-histidyl-tRNA(His) + AMP + diphosphate + H(+). The chain is Histidine--tRNA ligase from Synechococcus sp. (strain CC9902).